Here is a 201-residue protein sequence, read N- to C-terminus: Small ribosomal subunit protein uS4 (201 aa).

In terms of domain architecture, S4 RNA-binding spans Arg93–Val156.

The protein belongs to the universal ribosomal protein uS4 family. Part of the 30S ribosomal subunit. Contacts protein S5. The interaction surface between S4 and S5 is involved in control of translational fidelity.

Functionally, one of the primary rRNA binding proteins, it binds directly to 16S rRNA where it nucleates assembly of the body of the 30S subunit. With S5 and S12 plays an important role in translational accuracy. This Limosilactobacillus reuteri subsp. reuteri (strain JCM 1112) (Lactobacillus reuteri) protein is Small ribosomal subunit protein uS4.